The chain runs to 418 residues: D-amino acid dehydrogenase (418 aa).

Residue 3–17 (VTILGAGVVGVTSAW) participates in FAD binding.

Belongs to the DadA oxidoreductase family. FAD serves as cofactor.

It carries out the reaction a D-alpha-amino acid + A + H2O = a 2-oxocarboxylate + AH2 + NH4(+). Its pathway is amino-acid degradation; D-alanine degradation; NH(3) and pyruvate from D-alanine: step 1/1. Functionally, oxidative deamination of D-amino acids. This chain is D-amino acid dehydrogenase, found in Agrobacterium fabrum (strain C58 / ATCC 33970) (Agrobacterium tumefaciens (strain C58)).